Consider the following 181-residue polypeptide: HGPRTase-like protein 1 (181 aa).

This sequence belongs to the purine/pyrimidine phosphoribosyltransferase family. Archaeal HPRT subfamily.

In terms of biological role, may catalyze a purine salvage reaction, the substrate is unknown. In Halalkalicoccus jeotgali (strain DSM 18796 / CECT 7217 / JCM 14584 / KCTC 4019 / B3), this protein is HGPRTase-like protein 1.